A 476-amino-acid polypeptide reads, in one-letter code: MVAVPTSMASLQAPPQYVVADIDLADFGRKELSIAETEMPGLMALRVKHGSEKPLKGARIAGSLHMTIQTGVLIETLVALGADVRWASCNIFSTQDHAAAAIAASGVPVFATKGETLDEYWAYTHRILEWGDGGTPNMILDDGGDATGLVMLGSKAESDSSVLDNPGNEEETALFASIRTKLAQDSSFYSRIKSNIQGVTEETTTGVARLYQMQKSGELPFPAINVNDSVTKSKFDNLYGCRESLVDGIKRATDVMVAGKVALVMGYGDVGKGSAQSLRGLGATVMIAEIDPICALQAAMEGYRVVRLDEVVQDVDIFVTSTGNFQVIRHEHLIRMKDEAIVCNIGHFDNEIDVASLKDYSWENIKPQVDHITLPSGNKIILLAEGRLVNLGCATGHPSFVMSNSFTNQVLAQIELFSKGDKYADQVYVLPKHLDEMVARLHLEKIGARLTELTKQQADYISVPIEGPYKPDHYRY.

3 residues coordinate substrate: T67, D142, and E202. Position 203 to 205 (203 to 205 (TTT)) interacts with NAD(+). Residues K232 and D236 each contribute to the substrate site. NAD(+) contacts are provided by residues N237, 266–271 (GYGDVG), E289, N324, 345–347 (IGH), and N390.

It belongs to the adenosylhomocysteinase family. NAD(+) serves as cofactor.

The protein resides in the cytoplasm. The enzyme catalyses S-adenosyl-L-homocysteine + H2O = L-homocysteine + adenosine. Its pathway is amino-acid biosynthesis; L-homocysteine biosynthesis; L-homocysteine from S-adenosyl-L-homocysteine: step 1/1. Its function is as follows. May play a key role in the regulation of the intracellular concentration of adenosylhomocysteine. This Prochlorococcus marinus (strain MIT 9303) protein is Adenosylhomocysteinase.